We begin with the raw amino-acid sequence, 186 residues long: Peptidyl-tRNA hydrolase (186 aa).

Tyrosine 14 contacts tRNA. Histidine 19 acts as the Proton acceptor in catalysis. 3 residues coordinate tRNA: tyrosine 64, asparagine 66, and asparagine 112.

The protein belongs to the PTH family. As to quaternary structure, monomer.

It localises to the cytoplasm. The enzyme catalyses an N-acyl-L-alpha-aminoacyl-tRNA + H2O = an N-acyl-L-amino acid + a tRNA + H(+). Functionally, hydrolyzes ribosome-free peptidyl-tRNAs (with 1 or more amino acids incorporated), which drop off the ribosome during protein synthesis, or as a result of ribosome stalling. In terms of biological role, catalyzes the release of premature peptidyl moieties from peptidyl-tRNA molecules trapped in stalled 50S ribosomal subunits, and thus maintains levels of free tRNAs and 50S ribosomes. The chain is Peptidyl-tRNA hydrolase from Bacillus cereus (strain Q1).